A 1032-amino-acid chain; its full sequence is Protein transport protein Sec24D (1032 aa).

Positions 1–260 (MSQQGYVATP…GPPQPQKKLD (260 aa)) are disordered. Residues 102–133 (PSAQSSYPGPISTSSVTQLGSQLSAMQINSYG) are compositionally biased toward polar residues. The segment covering 198-212 (GPPPPNAQYQPPPLP) has biased composition (pro residues). S266 is modified (phosphoserine). 4 residues coordinate Zn(2+): C363, C366, C385, and C388. The interval 363 to 388 (CNRCKAYMCPFMQFIEGGRRYQCGFC) is zinc finger-like. Residues 901–974 (MLPAAVRCSE…PYSQQLRMIM (74 aa)) form a Gelsolin-like repeat.

This sequence belongs to the SEC23/SEC24 family. SEC24 subfamily. COPII is composed of at least five proteins: the Sec23/24 complex, the Sec13/31 complex and Sar1. Interacts with TMED2 and TMED10. Interacts with CNIH4. Interacts with GOSR2 (via IxM motif) and STX5 (via IxM motif); recruits GOSR2 and STX5 into COPII-coated vesicles. Interacts with KCNA3; this interaction is reduced in the presence of KCNE4. In terms of tissue distribution, ubiquitously expressed, with higher amounts in placenta, pancreas, heart and liver.

It localises to the cytoplasmic vesicle. The protein localises to the COPII-coated vesicle membrane. Its subcellular location is the endoplasmic reticulum membrane. It is found in the cytoplasm. The protein resides in the cytosol. In terms of biological role, component of the coat protein complex II (COPII) which promotes the formation of transport vesicles from the endoplasmic reticulum (ER). The coat has two main functions, the physical deformation of the endoplasmic reticulum membrane into vesicles and the selection of cargo molecules for their transport to the Golgi complex. Plays a central role in cargo selection within the COPII complex and together with SEC24C may have a different specificity compared to SEC24A and SEC24B. May more specifically package GPI-anchored proteins through the cargo receptor TMED10. May also be specific for IxM motif-containing cargos like the SNAREs GOSR2 and STX5. The polypeptide is Protein transport protein Sec24D (Homo sapiens (Human)).